The sequence spans 228 residues: MGSLLQGFTKSLAMTFLSEIGDKTFFAAAILAMRYPRRLVLAGCLSALIVMTILSATLGWAAPNLISRKWTHHITTFLFFGFGLWSLWDGFKEGGGSEELAEVEAELDSDLKKTNDQSKNSKIEDEQKKQKRPFLTAFFSPIFLKAFSINFFGEWGDKSQLATIGLAADENPLGVVLGGIVAQTLCTTAAVLGGKSLASQISERIVALSGGMLFIIFGIQSLLTPVDA.

Residue Gly-2 is modified to N-acetylglycine. The next 6 membrane-spanning stretches (helical) occupy residues 12–32, 39–59, 71–91, 133–153, 173–193, and 205–225; these read LAMT…AILA, LVLA…ATLG, THHI…WDGF, PFLT…NFFG, LGVV…AVLG, and IVAL…LLTP.

Belongs to the GDT1 family.

The protein localises to the membrane. The protein is GDT1-like protein 5 of Arabidopsis thaliana (Mouse-ear cress).